Here is a 213-residue protein sequence, read N- to C-terminus: Ras-related protein Rab-25 (213 aa).

Residues Ser-21, Gly-24, Lys-25, Thr-26, Asn-27, Ser-38, His-39, Thr-43, and Thr-44 each coordinate GTP. Thr-26 lines the Mg(2+) pocket. Short sequence motifs (switch) lie at residues 35 to 49 and 67 to 84; these read NEFSHDSRTTIGVEF and DTAGLERYRAITSAYYRG. Thr-44 and Asp-67 together coordinate Mg(2+). GTP contacts are provided by Gly-70, Asn-125, Lys-126, Asp-128, Ala-156, and Leu-157. 2 S-geranylgeranyl cysteine lipidation sites follow: Cys-209 and Cys-210. Cys-210 bears the Cysteine methyl ester mark. A propeptide spans 211–213 (removed in mature form); it reads ISL.

Belongs to the small GTPase superfamily. Rab family. In terms of assembly, interacts (GTP-bound form) with RAB11FIP1, RAB11FIP2, RAB11FIP3 and RAB11FIP4. Interacts (via the hypervariable C-terminal region) with ITGB1 (via the cytoplasmic region); the interaction is GTP-dependent. Interacts with ITGAV. Associates with the integrin alpha-V/beta-1 heterodimer. Interacts with VPS33B. The cofactor is Mg(2+).

Its subcellular location is the cell membrane. The protein resides in the cell projection. It is found in the pseudopodium membrane. It localises to the cytoplasmic vesicle. It carries out the reaction GTP + H2O = GDP + phosphate + H(+). Its activity is regulated as follows. Regulated by guanine nucleotide exchange factors (GEFs) which promote the exchange of bound GDP for free GTP. Regulated by GTPase activating proteins (GAPs) which increase the GTP hydrolysis activity. Inhibited by GDP dissociation inhibitors (GDIs) which prevent Rab-GDP dissociation. Functionally, the small GTPases Rab are key regulators of intracellular membrane trafficking, from the formation of transport vesicles to their fusion with membranes. Rabs cycle between an inactive GDP-bound form and an active GTP-bound form that is able to recruit to membranes different set of downstream effectors directly responsible for vesicle formation, movement, tethering and fusion. RAB25 regulates epithelial cell differentiation, proliferation and survival, thereby playing key roles in tumorigenesis. Promotes invasive migration of cells in which it functions to localize and maintain integrin alpha-V/beta-1 at the tips of extending pseudopodia. Involved in the regulation of epithelial morphogenesis through the control of CLDN4 expression and localization at tight junctions. May selectively regulate the apical recycling pathway. Together with MYO5B regulates transcytosis. This is Ras-related protein Rab-25 from Mus musculus (Mouse).